Reading from the N-terminus, the 329-residue chain is Sex comb on midleg-like protein 1 (329 aa).

S138 and S238 each carry phosphoserine. The disordered stretch occupies residues 138–157; sequence SPTLPVSRRENNSPSNLPRP. Residues 258 to 325 form the SAM domain; the sequence is WSVEAVVLFL…YYIDRLKQGK (68 aa).

The protein belongs to the SCM family. As to expression, ubiquitous. Expressed in fetal and adult tissues.

The protein resides in the nucleus. Its function is as follows. Putative Polycomb group (PcG) protein. PcG proteins act by forming multiprotein complexes, which are required to maintain the transcriptionally repressive state of homeotic genes throughout development. May be involved in spermatogenesis during sexual maturation. In Homo sapiens (Human), this protein is Sex comb on midleg-like protein 1 (SCML1).